The primary structure comprises 256 residues: Calsenilin (256 aa).

A disordered region spans residues 1–20 (MQPAKEVTKASDGSLLGDLG). Residue S14 is modified to Phosphoserine. Residue K26 forms a Glycyl lysine isopeptide (Lys-Gly) (interchain with G-Cter in SUMO1) linkage. S-palmitoyl cysteine attachment occurs at residues C45 and C46. Position 60 is a phosphoserine (S60). A Phosphoserine; by CK1 modification is found at S63. The EF-hand 1; degenerate domain occupies 67–123 (LELSTVRHQPEGLDQLQAQTKFTKKELQSLYRGFKNECPTGLVDEDTFKLIYAQFFP). Residue K90 forms a Glycyl lysine isopeptide (Lys-Gly) (interchain with G-Cter in SUMO1) linkage. EF-hand domains are found at residues 126-161 (DATTYAHFLFNAFDADGNGAIHFEDFVVGLSILLRG), 162-197 (TVHEKLKWAFNLYDINKDGYITKEEMLAIMKSIYDM), and 210-245 (APAEHVERFFEKMDRNQDGVVTIEEFLEACQKDENI). Positions 175, 177, 179, 181, 186, 223, 225, 227, and 234 each coordinate Ca(2+). Residues 243–256 (ENIMSSMQLFENVI) are interaction with KCND2.

This sequence belongs to the recoverin family. As to quaternary structure, binds to DNA as a homomultimer. Dimerization is induced by binding to calcium. Interacts with the C-terminus of PSEN1 and PSEN2 and with PSEN2 CTF subunit. Associates with KCN1. Component of heteromultimeric potassium channels. Identified in potassium channel complexes containing KCND1, KCND2, KCND3, KCNIP1, KCNIP2, KCNIP3, KCNIP4, DPP6 and DPP10. Interacts with KCND2 and KCND3. In terms of processing, palmitoylated. Palmitoylation enhances association with the plasma membrane. Proteolytically cleaved by caspase-3. Post-translationally, phosphorylation at Ser-63 inhibits cleavage by CASP3. Highly expressed in brain. Widely expressed at lower levels. Expression levels are elevated in brain cortex regions affected by Alzheimer disease.

The protein localises to the cytoplasm. It localises to the cell membrane. It is found in the endoplasmic reticulum. Its subcellular location is the golgi apparatus. The protein resides in the nucleus. Its function is as follows. Calcium-dependent transcriptional repressor that binds to the DRE element of genes including PDYN and FOS. Affinity for DNA is reduced upon binding to calcium and enhanced by binding to magnesium. Seems to be involved in nociception. In terms of biological role, regulatory subunit of Kv4/D (Shal)-type voltage-gated rapidly inactivating A-type potassium channels, such as KCND2/Kv4.2 and KCND3/Kv4.3. Modulates channel expression at the cell membrane, gating characteristics, inactivation kinetics and rate of recovery from inactivation in a calcium-dependent and isoform-specific manner. Functionally, may play a role in the regulation of PSEN2 proteolytic processing and apoptosis. Together with PSEN2 involved in modulation of amyloid-beta formation. The chain is Calsenilin (KCNIP3) from Homo sapiens (Human).